Here is a 193-residue protein sequence, read N- to C-terminus: Segregation and condensation protein B (193 aa).

Belongs to the ScpB family. Homodimer. Homodimerization may be required to stabilize the binding of ScpA to the Smc head domains. Component of a cohesin-like complex composed of ScpA, ScpB and the Smc homodimer, in which ScpA and ScpB bind to the head domain of Smc. The presence of the three proteins is required for the association of the complex with DNA.

Its subcellular location is the cytoplasm. Participates in chromosomal partition during cell division. May act via the formation of a condensin-like complex containing Smc and ScpA that pull DNA away from mid-cell into both cell halves. This Clostridium botulinum (strain Kyoto / Type A2) protein is Segregation and condensation protein B.